The sequence spans 202 residues: Snake venom metalloproteinase fibrolase (202 aa).

In terms of domain architecture, Peptidase M12B spans 6–202; that stretch reads RYIELVIVAD…HNPQCILNQP (197 aa). Ca(2+) is bound at residue glutamate 9. Asparagine 25 carries an N-linked (GlcNAc...) asparagine glycan. Ca(2+) is bound at residue aspartate 93. 3 disulfides stabilise this stretch: cysteine 117–cysteine 197, cysteine 157–cysteine 181, and cysteine 159–cysteine 164. Zn(2+) is bound at residue histidine 142. Glutamate 143 is an active-site residue. Residues histidine 146 and histidine 152 each contribute to the Zn(2+) site. The Ca(2+) site is built by cysteine 197 and asparagine 200.

This sequence belongs to the venom metalloproteinase (M12B) family. P-I subfamily. In terms of assembly, monomer. Zn(2+) is required as a cofactor. In terms of processing, glycosylated. In terms of tissue distribution, expressed by the venom gland.

The protein localises to the secreted. It carries out the reaction Hydrolysis of 14-Ala-|-Leu-15 in insulin B chain and 413-Lys-|-Leu-414 in alpha-chain of fibrinogen.. Activated by calcium and magnesium ions. Inhibited by EDTA, DTT and L-cysteine. Activity is not affected by PMSF or heparin. Functionally, has fibrino(geno)lytic activity on the alpha and beta chains of fibrinogen (FGA and FGB). Inhibits human ADP- and collagen-induced platelet aggregation on platelet-rich plasma but does not affect the thrombin-induced aggregation of rabbit washed platelets. Slightly degrades plasminogen. The protein is Snake venom metalloproteinase fibrolase of Macrovipera lebetinus (Levantine viper).